The primary structure comprises 415 residues: Imidazolonepropionase (415 aa).

His83 and His85 together coordinate Fe(3+). Residues His83 and His85 each contribute to the Zn(2+) site. Arg92, Tyr155, and His188 together coordinate 4-imidazolone-5-propanoate. Tyr155 is an N-formimidoyl-L-glutamate binding site. Fe(3+) is bound at residue His250. His250 lines the Zn(2+) pocket. Gln253 contacts 4-imidazolone-5-propanoate. Asp324 contacts Fe(3+). Asp324 contributes to the Zn(2+) binding site. N-formimidoyl-L-glutamate contacts are provided by Asn326 and Gly328. Ser329 lines the 4-imidazolone-5-propanoate pocket.

The protein belongs to the metallo-dependent hydrolases superfamily. HutI family. Zn(2+) is required as a cofactor. Requires Fe(3+) as cofactor.

It localises to the cytoplasm. The enzyme catalyses 4-imidazolone-5-propanoate + H2O = N-formimidoyl-L-glutamate. It functions in the pathway amino-acid degradation; L-histidine degradation into L-glutamate; N-formimidoyl-L-glutamate from L-histidine: step 3/3. Catalyzes the hydrolytic cleavage of the carbon-nitrogen bond in imidazolone-5-propanoate to yield N-formimidoyl-L-glutamate. It is the third step in the universal histidine degradation pathway. The polypeptide is Imidazolonepropionase (Rubrobacter xylanophilus (strain DSM 9941 / JCM 11954 / NBRC 16129 / PRD-1)).